Consider the following 71-residue polypeptide: Putative RNA-binding regulatory peptide (71 aa).

Interacts with IGF2BP1 (via KH3 and KH4 domains); the interaction results in increased binding of IGF2BP1 to N6-methyladenosine (m6A)-containing mRNAs. Detected in colon (at protein level).

Functionally, enhances binding of IGF2BP1 to N6-methyladenosine (m6A)-containing mRNAs, thereby contributing to increased mRNA stability. Also increases the interaction of IGF2BP1 with RNA stabilizers ELAVL1/HUR, MATR3 and PABPC1, and increases the interaction of RNA stabilizers ELAVL1/HUR, MATR3 and PABPC1 with m6A-containing mRNAs. Contributes to MYC stability by enhancing binding of IGF2BP1 to m6A-containing MYC mRNAs and increasing recruitment of RNA stabilizing proteins to m6A-containing MYC mRNAs. This chain is Putative RNA-binding regulatory peptide, found in Homo sapiens (Human).